A 500-amino-acid chain; its full sequence is Serine/threonine-protein phosphatase 2A 56 kDa regulatory subunit beta isoform (500 aa).

Over residues 1 to 19 (METKLPPASTPTSPSSPGL) the composition is skewed to low complexity. Disordered stretches follow at residues 1-55 (METK…YQSN) and 474-500 (GTQG…GGQS). A phosphoserine; by CLK2 mark is found at Ser-32, Ser-35, Ser-44, Ser-46, Ser-47, and Ser-48. Over residues 34-45 (RSLRRARPRRSH) the composition is skewed to basic residues.

Belongs to the phosphatase 2A regulatory subunit B56 family. In terms of assembly, component of the serine/threonine-protein phosphatase 2A complex (PP2A). This complex consists of a common heterodimeric core enzyme, composed of a 36 kDa catalytic subunit (subunit C) and a 65 kDa constant scaffold subunit (PR65 or subunit A), that associates with a variety of regulatory subunits. Proteins that associate with the core dimer include three families of regulatory subunits B (the R2/B/PR55/B55, R3/B''/PR72/PR130/PR59 and R5/B'/B56 families), the 48 kDa variable regulatory subunit, viral proteins, and cell signaling molecules. Interacts with SGO1. Interacts with AKT1. Highly expressed in brain.

It localises to the nucleus. In terms of biological role, as the regulatory component of the serine/threonine-protein phosphatase 2A (PP2A) holoenzyme, modulates substrate specificity, subcellular localization, and responsiveness to phosphorylation. The phosphorylated form mediates the interaction between PP2A and AKT1, leading to AKT1 dephosphorylation. The chain is Serine/threonine-protein phosphatase 2A 56 kDa regulatory subunit beta isoform (PPP2R5B) from Oryctolagus cuniculus (Rabbit).